The primary structure comprises 1495 residues: Terminal uridylyltransferase 7 (1495 aa).

Disordered stretches follow at residues 1–30, 43–69, 89–140, and 162–205; these read MGDT…GHPQ, HGSK…RKGP, WMND…EDGY, and LETT…PVID. A compositionally biased stretch (basic and acidic residues) spans 15-26; the sequence is DRGTMDDDDFRR. Residues Thr57 and Thr64 each carry the phosphothreonine modification. Basic and acidic residues-rich tracts occupy residues 92 to 118 and 128 to 140; these read DSHK…EFKP and QRKD…EDGY. Ser132 and Ser172 each carry phosphoserine. Residues 178 to 187 show a composition bias toward basic residues; the sequence is QRSRPRKPRK. The Matrin-type zinc-finger motif lies at 244–274; the sequence is YTCRLCDVLIESIAFAHKHIKEKRHKKNIKE. Residues 551–600 enclose the PAP-associated 1 domain; the sequence is VGQLWVELLRFYALEFNLADLVISIRVKELVSRELKDWPKKRIAIEDPYS. The residue at position 600 (Ser600) is a Phosphoserine. Residues 734–756 show a composition bias toward basic and acidic residues; that stretch reads DDYKGDKVYHPETGRKNEKEKVG. Disordered stretches follow at residues 734 to 757 and 831 to 898; these read DDYK…KVGR and THSV…EDDE. Residues 831–841 show a composition bias toward polar residues; sequence THSVQGQTSEM. Composition is skewed to acidic residues over residues 843-859, 868-880, and 887-898; these read PSDE…EEEE, EDED…DELD, and GDEDALSEEDDE. A Phosphoserine modification is found at Ser844. Ser893 and Ser939 each carry phosphoserine. The sufficient for monouridylation activity stretch occupies residues 951–1495; sequence SKLIFTKGKS…ASAKRTQQES (545 aa). The segment at 963–980 adopts a CCHC-type 1 zinc-finger fold; sequence VVCSLCKREGHLKKDCPE. UTP is bound by residues 1047 to 1050, 1057 to 1060, Asn1130, Lys1152, 1170 to 1174, and His1286; these read SSKN, SDLD, and SYAYT. 2 residues coordinate Mg(2+): Asp1058 and Asp1060. In terms of domain architecture, PAP-associated 2 spans 1233–1286; the sequence is SVGQLWLGLLRFYTEEFDFKEHVISIRRKSLLTTFKKQWTSKYIVIEDPFDLNH. The CCHC-type 2 zinc finger occupies 1345–1362; it reads RCCRICGKIGHFMKDCPM. 2 disordered regions span residues 1367-1424 and 1466-1495; these read RRRR…MRAA and CPQF…QQES. The segment covering 1381–1410 has biased composition (basic and acidic residues); sequence PENKEKRSKEDKEIHNKYTEREVSTKEDKP. The segment at 1451-1468 adopts a CCHC-type 3 zinc-finger fold; the sequence is KRCFICGREGHIKKECPQ. Residues 1470 to 1485 are compositionally biased toward polar residues; that stretch reads KGSSGSLSSKYMTQGK.

It belongs to the DNA polymerase type-B-like family. As to quaternary structure, interacts with MOV10; the interaction is RNA-dependent. The cofactor is Mg(2+). Requires Mn(2+) as cofactor.

The protein resides in the cytoplasm. The catalysed reaction is RNA(n) + UTP = RNA(n)-3'-uridine ribonucleotide + diphosphate. Functionally, uridylyltransferase that mediates the terminal uridylation of mRNAs with short (less than 25 nucleotides) poly(A) tails, hence facilitating global mRNA decay. Essential for both oocyte maturation and fertility. Through 3' terminal uridylation of mRNA, sculpts, with TUT7, the maternal transcriptome by eliminating transcripts during oocyte growth. Involved in microRNA (miRNA)-induced gene silencing through uridylation of deadenylated miRNA targets. Also functions as an integral regulator of microRNA biogenesiS using 3 different uridylation mechanisms. Acts as a suppressor of miRNA biogenesis by mediating the terminal uridylation of some miRNA precursors, including that of let-7 (pre-let-7). Uridylated pre-let-7 RNA is not processed by Dicer and undergo degradation. Pre-let-7 uridylation is strongly enhanced in the presence of LIN28A. In the absence of LIN28A, TUT7 and TUT4 monouridylate group II pre-miRNAs, which includes most of pre-let7 members, that shapes an optimal 3' end overhang for efficient processing. Add oligo-U tails to truncated pre-miRNAS with a 5' overhang which may promote rapid degradation of non-functional pre-miRNA species. Does not play a role in replication-dependent histone mRNA degradation. Due to functional redundancy between TUT4 and TUT7, the identification of the specific role of each of these proteins is difficult. TUT4 and TUT7 restrict retrotransposition of long interspersed element-1 (LINE-1) in cooperation with MOV10 counteracting the RNA chaperonne activity of L1RE1. TUT7 uridylates LINE-1 mRNAs in the cytoplasm which inhibits initiation of reverse transcription once in the nucleus, whereas uridylation by TUT4 destabilizes mRNAs in cytoplasmic ribonucleoprotein granules. This Homo sapiens (Human) protein is Terminal uridylyltransferase 7.